We begin with the raw amino-acid sequence, 522 residues long: MAKENGFIGSIDQGTTSTRFIIYDHDARPVASHQVEFTQFYPEAGWVEHDPMEILESVKVCIAKALDKATADGHNVDGGLKAIGLTDQRETTVVWSKSTGLPLHKAIVWMDARTSSICRRLEKELSGGRSHFVESCGLPISTYFSAMKLLWLMENVDDVKDAIKKGDAIFGTIDTWLIWNMTGGINGGLHVTDVTNASRTMLMNLKTLSWDQDTLKTLGIPAEILPKIVSNSEVIGEICKGWPIPGIKIAGCLGDQHAAMLGQACRKGEAKSTYGTGAFILLNTGEVPIKSGHGLLTTLAYKLGPQAQTNYALEGSIAIAGAAVQWLRDSLGIIKSASEIEDLAAMVDSTGGVYFVPAFNGLFAPWWREDARGVCIGITRFTNKSHIARAVLESMCFQVKDVLDSMNKDAGEKGSLNNGKGEFLLRVDGGATANNLLMQIQADLMGSPVVRPVDIETTALGAAYAAGLAVGFWKEADIFESGEKAKNSKVFRPAMEEGIRKKKVASWCKAVERTFDLADLSI.

T15 contributes to the substrate binding site. Residue R19 participates in ATP binding. Residues 89-90, Y143, and 255-256 each bind substrate; these read RE and DQ. ATP is bound by residues T276, G321, and 430 to 434; that span reads GATAN.

The protein belongs to the FGGY kinase family. Highly expressed in germinating seeds and senescent leaves, and at lower levels in roots, leaves, flowers and siliques.

It localises to the cytoplasm. Its subcellular location is the cytosol. The catalysed reaction is glycerol + ATP = sn-glycerol 3-phosphate + ADP + H(+). Its pathway is polyol metabolism; glycerol degradation via glycerol kinase pathway; sn-glycerol 3-phosphate from glycerol: step 1/1. Functionally, key enzyme in the regulation of glycerol uptake and metabolism. Required for resistance to nonhost Pseudomonas bacteria and to the pathogenic fungus B.cinerea. The polypeptide is Glycerol kinase (GLPK) (Arabidopsis thaliana (Mouse-ear cress)).